An 89-amino-acid polypeptide reads, in one-letter code: Probable Fe(2+)-trafficking protein (89 aa).

This sequence belongs to the Fe(2+)-trafficking protein family.

Its function is as follows. Could be a mediator in iron transactions between iron acquisition and iron-requiring processes, such as synthesis and/or repair of Fe-S clusters in biosynthetic enzymes. This Hahella chejuensis (strain KCTC 2396) protein is Probable Fe(2+)-trafficking protein.